We begin with the raw amino-acid sequence, 338 residues long: 1-aminocyclopropane-1-carboxylate deaminase (338 aa).

An N6-(pyridoxal phosphate)lysine modification is found at Lys51. Ser78 serves as the catalytic Nucleophile.

It belongs to the ACC deaminase/D-cysteine desulfhydrase family. In terms of assembly, homotrimer. The cofactor is pyridoxal 5'-phosphate.

It catalyses the reaction 1-aminocyclopropane-1-carboxylate + H2O = 2-oxobutanoate + NH4(+). Functionally, catalyzes a cyclopropane ring-opening reaction, the irreversible conversion of 1-aminocyclopropane-1-carboxylate (ACC) to ammonia and alpha-ketobutyrate. Allows growth on ACC as a nitrogen source. The sequence is that of 1-aminocyclopropane-1-carboxylate deaminase from Ralstonia pickettii (strain 12J).